The following is a 122-amino-acid chain: Holo-[acyl-carrier-protein] synthase (122 aa).

Mg(2+) contacts are provided by Asp8 and Glu55.

It belongs to the P-Pant transferase superfamily. AcpS family. The cofactor is Mg(2+).

It is found in the cytoplasm. The catalysed reaction is apo-[ACP] + CoA = holo-[ACP] + adenosine 3',5'-bisphosphate + H(+). Its function is as follows. Transfers the 4'-phosphopantetheine moiety from coenzyme A to a Ser of acyl-carrier-protein. The protein is Holo-[acyl-carrier-protein] synthase of Fusobacterium nucleatum subsp. nucleatum (strain ATCC 25586 / DSM 15643 / BCRC 10681 / CIP 101130 / JCM 8532 / KCTC 2640 / LMG 13131 / VPI 4355).